The primary structure comprises 356 residues: MSFSLDELAASLGATVQGDAGLIVKSIAPLDQAGADQLAFLSNPLYLNQAVTSGAGAIIVSPRDLETLTAEGHAAGRNWLVAANPYAAFARIAQRFAALGARPAAAGIHPSASVGEGAVVPASCSIGPNVTIEAGAVLGERVRIAGNSFIGADAQVGDDTLLYANVSIYHGCVVGARCILHSGVVIGADGFGFAPDFGPQGGEWVKIPQTGRAIVGDDVEIGANTAIDRGAMADTVVEQGCKIDNQVQIAHNVHVGAYTVIAGCAAISGSTKIGRYCIIGGAANFAGHLTIADRVTVSGGTSITKSIPKPGHFTSVFPFMPHADWERNAAILRGLTRMRERLQQLEQQVKHLQQSS.

His-251 functions as the Proton acceptor in the catalytic mechanism.

It belongs to the transferase hexapeptide repeat family. LpxD subfamily. In terms of assembly, homotrimer.

The enzyme catalyses a UDP-3-O-[(3R)-3-hydroxyacyl]-alpha-D-glucosamine + a (3R)-hydroxyacyl-[ACP] = a UDP-2-N,3-O-bis[(3R)-3-hydroxyacyl]-alpha-D-glucosamine + holo-[ACP] + H(+). It participates in bacterial outer membrane biogenesis; LPS lipid A biosynthesis. In terms of biological role, catalyzes the N-acylation of UDP-3-O-acylglucosamine using 3-hydroxyacyl-ACP as the acyl donor. Is involved in the biosynthesis of lipid A, a phosphorylated glycolipid that anchors the lipopolysaccharide to the outer membrane of the cell. The chain is UDP-3-O-acylglucosamine N-acyltransferase from Ralstonia nicotianae (strain ATCC BAA-1114 / GMI1000) (Ralstonia solanacearum).